The chain runs to 378 residues: Succinyl-diaminopimelate desuccinylase 2 (378 aa).

Histidine 68 is a binding site for Zn(2+). Aspartate 70 is an active-site residue. Aspartate 101 contributes to the Zn(2+) binding site. Glutamate 135 functions as the Proton acceptor in the catalytic mechanism. Residues glutamate 136, glutamate 164, and histidine 350 each coordinate Zn(2+).

The protein belongs to the peptidase M20A family. DapE subfamily. As to quaternary structure, homodimer. Zn(2+) is required as a cofactor. Co(2+) serves as cofactor.

It catalyses the reaction N-succinyl-(2S,6S)-2,6-diaminopimelate + H2O = (2S,6S)-2,6-diaminopimelate + succinate. It participates in amino-acid biosynthesis; L-lysine biosynthesis via DAP pathway; LL-2,6-diaminopimelate from (S)-tetrahydrodipicolinate (succinylase route): step 3/3. Catalyzes the hydrolysis of N-succinyl-L,L-diaminopimelic acid (SDAP), forming succinate and LL-2,6-diaminopimelate (DAP), an intermediate involved in the bacterial biosynthesis of lysine and meso-diaminopimelic acid, an essential component of bacterial cell walls. The chain is Succinyl-diaminopimelate desuccinylase 2 from Alteromonas mediterranea (strain DSM 17117 / CIP 110805 / LMG 28347 / Deep ecotype).